A 220-amino-acid chain; its full sequence is MKHSSGLIVFDMDSTLIHIECIDEIARLNNRYTKVSAITEAAMRGEIDFAESLTQRVACLEGIKESDLESLFSPIPFNPGAKELIQALQAAGWKTALVSGGFTWFANRVQAALNLDAVVANQLEVADGCLTGKVLGDIVDAQVKAEQLQQLAGHWNIPPDRTVAVGDGANDGLMLKAAAVGIAFNAKPALQAIADYSVNSNNLLEILGCLKQSELIEPVI.

The active-site Nucleophile is the Asp-11. Asp-11 and Asp-13 together coordinate Mg(2+). Catalysis depends on Asp-13, which acts as the Proton donor. Residues Glu-20, Arg-56, Ser-99–Gly-100, and Lys-144 contribute to the substrate site. Asp-167 contributes to the Mg(2+) binding site. Asn-170 lines the substrate pocket.

The protein belongs to the HAD-like hydrolase superfamily. SerB family. It depends on Mg(2+) as a cofactor.

It carries out the reaction O-phospho-L-serine + H2O = L-serine + phosphate. The catalysed reaction is O-phospho-D-serine + H2O = D-serine + phosphate. The protein operates within amino-acid biosynthesis; L-serine biosynthesis; L-serine from 3-phospho-D-glycerate: step 3/3. This is Phosphoserine phosphatase from Idiomarina loihiensis (strain ATCC BAA-735 / DSM 15497 / L2-TR).